Here is a 227-residue protein sequence, read N- to C-terminus: MAYPFQLGLQDATSPIMEELTNFHDHTLMIVFLISSLVLYIISLMLTTKLTHTSTMDAQEVETIWTILPAAILVLIALPSLRILYMMDEINNPALTVKTMGHQWYWSYEYTDYEDLCFDSYMTPTNELKPGELRLLEVDNRIVLPMELPIRMLISSEDVLHSWAVPSLGLKTDAIPGRLNQATVTSNRPGLFYGQCSEICGSNHSFMPIVLEMVPLKYFENWSASMI.

The Mitochondrial intermembrane segment spans residues 1-14 (MAYPFQLGLQDATS). Residues 15–45 (PIMEELTNFHDHTLMIVFLISSLVLYIISLM) form a helical membrane-spanning segment. Residues 46–59 (LTTKLTHTSTMDAQ) are Mitochondrial matrix-facing. Residues 60-87 (EVETIWTILPAAILVLIALPSLRILYMM) form a helical membrane-spanning segment. Over 88–227 (DEINNPALTV…YFENWSASMI (140 aa)) the chain is Mitochondrial intermembrane. Cu cation-binding residues include His-161, Cys-196, Glu-198, Cys-200, His-204, and Met-207. Residue Glu-198 coordinates Mg(2+). At Tyr-218 the chain carries Phosphotyrosine.

This sequence belongs to the cytochrome c oxidase subunit 2 family. In terms of assembly, component of the cytochrome c oxidase (complex IV, CIV), a multisubunit enzyme composed of 14 subunits. The complex is composed of a catalytic core of 3 subunits MT-CO1, MT-CO2 and MT-CO3, encoded in the mitochondrial DNA, and 11 supernumerary subunits COX4I, COX5A, COX5B, COX6A, COX6B, COX6C, COX7A, COX7B, COX7C, COX8 and NDUFA4, which are encoded in the nuclear genome. The complex exists as a monomer or a dimer and forms supercomplexes (SCs) in the inner mitochondrial membrane with NADH-ubiquinone oxidoreductase (complex I, CI) and ubiquinol-cytochrome c oxidoreductase (cytochrome b-c1 complex, complex III, CIII), resulting in different assemblies (supercomplex SCI(1)III(2)IV(1) and megacomplex MCI(2)III(2)IV(2)). Found in a complex with TMEM177, COA6, COX18, COX20, SCO1 and SCO2. Interacts with TMEM177 in a COX20-dependent manner. Interacts with COX20. Interacts with COX16. The cofactor is Cu cation.

The protein resides in the mitochondrion inner membrane. It carries out the reaction 4 Fe(II)-[cytochrome c] + O2 + 8 H(+)(in) = 4 Fe(III)-[cytochrome c] + 2 H2O + 4 H(+)(out). Its function is as follows. Component of the cytochrome c oxidase, the last enzyme in the mitochondrial electron transport chain which drives oxidative phosphorylation. The respiratory chain contains 3 multisubunit complexes succinate dehydrogenase (complex II, CII), ubiquinol-cytochrome c oxidoreductase (cytochrome b-c1 complex, complex III, CIII) and cytochrome c oxidase (complex IV, CIV), that cooperate to transfer electrons derived from NADH and succinate to molecular oxygen, creating an electrochemical gradient over the inner membrane that drives transmembrane transport and the ATP synthase. Cytochrome c oxidase is the component of the respiratory chain that catalyzes the reduction of oxygen to water. Electrons originating from reduced cytochrome c in the intermembrane space (IMS) are transferred via the dinuclear copper A center (CU(A)) of subunit 2 and heme A of subunit 1 to the active site in subunit 1, a binuclear center (BNC) formed by heme A3 and copper B (CU(B)). The BNC reduces molecular oxygen to 2 water molecules using 4 electrons from cytochrome c in the IMS and 4 protons from the mitochondrial matrix. The protein is Cytochrome c oxidase subunit 2 (MT-CO2) of Rhabdomys pumilio (Four-striped grass mouse).